Here is a 1358-residue protein sequence, read N- to C-terminus: Regulatory protein SIR4 (1358 aa).

Polar residues predominate over residues 1 to 15; that stretch reads MPNDNKTPNRSSTPK. Disordered regions lie at residues 1–98, 252–277, 356–466, 498–544, 677–726, 752–787, and 913–970; these read MPND…PHSN, SLSV…SPGI, HDEK…PPEI, VQGE…ISNG, ASTE…EDEQ, VSDS…DLDT, and HSQE…ENLS. Over residues 26 to 39 the composition is skewed to basic and acidic residues; sequence KIPEREEKSNEVKT. 2 stretches are compositionally biased toward polar residues: residues 49-66 and 75-96; these read KSKN…SPHQ and HKQL…SFPH. A compositionally biased stretch (basic and acidic residues) spans 373–388; it reads QKMKEDADLKRMEILK. The span at 428-437 shows a compositional bias: polar residues; sequence QENNYNSTSR. The span at 452-464 shows a compositional bias: basic and acidic residues; the sequence is KNGENKKIGKRPP. Over residues 507–517 the composition is skewed to polar residues; the sequence is RNNTLNVTPSK. Residue S692 is modified to Phosphoserine. The segment covering 706–720 has biased composition (polar residues); it reads FPVSLSQPSKKSFAN. The span at 754–766 shows a compositional bias: acidic residues; that stretch reads DSDDSSSDNDSLT. Positions 777–787 are enriched in basic and acidic residues; it reads NEIKVTNDLDT. A compositionally biased stretch (polar residues) spans 916–932; it reads EQNSSSAKPSQIPTVSS. A Glycyl lysine isopeptide (Lys-Gly) (interchain with G-Cter in SUMO) cross-link involves residue K1128. Positions 1271 to 1347 form a coiled coil; that stretch reads LSFVDIVLSK…DAKINKLMEK (77 aa).

Homodimer. Interacts with MPS3. Interacts with RIS1. Interacts with SIR1, SIR2 and SIR3. Interacts with YKU80. Interacts with UBP10. Interacts with RAP1 (via C-terminus).

It localises to the nucleus. In terms of biological role, the proteins SIR1 through SIR4 are required for transcriptional repression of the silent mating type loci, HML and HMR. The proteins SIR2 through SIR4 repress mulitple loci by modulating chromatin structure. Involves the compaction of chromatin fiber into a more condensed form. This is Regulatory protein SIR4 (SIR4) from Saccharomyces cerevisiae (strain ATCC 204508 / S288c) (Baker's yeast).